Consider the following 519-residue polypeptide: 3-octaprenyl-4-hydroxybenzoate carboxy-lyase (519 aa).

Asn177 serves as a coordination point for Mn(2+). Prenylated FMN is bound by residues 180–182, 194–196, and 199–200; these read IYR, RWL, and RG. Glu243 provides a ligand contact to Mn(2+). Asp318 acts as the Proton donor in catalysis.

The protein belongs to the UbiD family. In terms of assembly, homohexamer. Prenylated FMN serves as cofactor. The cofactor is Mn(2+).

The protein resides in the cell membrane. The enzyme catalyses a 4-hydroxy-3-(all-trans-polyprenyl)benzoate + H(+) = a 2-(all-trans-polyprenyl)phenol + CO2. It participates in cofactor biosynthesis; ubiquinone biosynthesis. Catalyzes the decarboxylation of 3-octaprenyl-4-hydroxy benzoate to 2-octaprenylphenol, an intermediate step in ubiquinone biosynthesis. The sequence is that of 3-octaprenyl-4-hydroxybenzoate carboxy-lyase from Burkholderia mallei (strain ATCC 23344).